A 104-amino-acid chain; its full sequence is MKREAFKMYLKPGYEAEYEKRHAAIWPELKALLSKNGVSDYSIYWDKETNILFAFQKTEGEGGSQDLGNTEIVQKWWDYMADIMEVNPDNSPVSIPLPEVFHMD.

Tyrosine 18 serves as a coordination point for substrate. Residue histidine 22 is the Proton donor of the active site. Residues tyrosine 41 and 76–77 contribute to the substrate site; that span reads WW.

This sequence belongs to the rhamnose mutarotase family. Homodimer.

Its subcellular location is the cytoplasm. The catalysed reaction is alpha-L-rhamnose = beta-L-rhamnose. It functions in the pathway carbohydrate metabolism; L-rhamnose metabolism. In terms of biological role, involved in the anomeric conversion of L-rhamnose. This is L-rhamnose mutarotase from Bacteroides thetaiotaomicron (strain ATCC 29148 / DSM 2079 / JCM 5827 / CCUG 10774 / NCTC 10582 / VPI-5482 / E50).